The sequence spans 524 residues: Casein kinase I homolog 3 (524 aa).

In terms of domain architecture, Protein kinase spans 14 to 319 (YAVGPKIGEG…YLISLMDDAL (306 aa)). Residues 20-28 (IGEGSFGVI) and lysine 60 each bind ATP. Aspartate 150 serves as the catalytic Proton acceptor. Disordered regions lie at residues 352–414 (HGYG…KQQH) and 427–474 (PETH…EHNL). The segment covering 360-373 (RVNGNTARNNVNTN) has biased composition (low complexity). Polar residues-rich tracts occupy residues 374-413 (SKTR…TKQQ) and 429-474 (THSN…EHNL). The short motif at 444–447 (YDSI) is the YXXZ targeting signal element. S-palmitoyl cysteine attachment occurs at residues cysteine 517, cysteine 518, cysteine 519, cysteine 520, cysteine 522, cysteine 523, and cysteine 524.

This sequence belongs to the protein kinase superfamily. CK1 Ser/Thr protein kinase family. Casein kinase I subfamily.

It localises to the cell membrane. The protein resides in the nucleus membrane. Its subcellular location is the vacuole membrane. The enzyme catalyses L-seryl-[protein] + ATP = O-phospho-L-seryl-[protein] + ADP + H(+). It catalyses the reaction L-threonyl-[protein] + ATP = O-phospho-L-threonyl-[protein] + ADP + H(+). Its function is as follows. Casein kinases are operationally defined by their preferential utilization of acidic proteins such as caseins as substrates. Phosphorylates MON1, inhibiting the guanine nucleotide exchange factor activity of the MON1-CCZ1 complex, possibly by preventing its recruitment to membranes by small GTPase RAB5 homologs. In Saccharomyces cerevisiae (strain ATCC 204508 / S288c) (Baker's yeast), this protein is Casein kinase I homolog 3 (YCK3).